A 126-amino-acid chain; its full sequence is Glycine cleavage system H protein (126 aa).

Residues 21-103 enclose the Lipoyl-binding domain; it reads TVTIGISEHA…YDGGWIVKVK (83 aa). At Lys62 the chain carries N6-lipoyllysine.

This sequence belongs to the GcvH family. In terms of assembly, the glycine cleavage system is composed of four proteins: P, T, L and H. (R)-lipoate is required as a cofactor.

Functionally, the glycine cleavage system catalyzes the degradation of glycine. The H protein shuttles the methylamine group of glycine from the P protein to the T protein. This chain is Glycine cleavage system H protein, found in Vibrio cholerae serotype O1 (strain ATCC 39541 / Classical Ogawa 395 / O395).